Reading from the N-terminus, the 464-residue chain is Protein VAPYRIN-LIKE (464 aa).

Residues 3 to 124 form the MSP domain; that stretch reads RLVKTEFNEV…RDAVITVILV (122 aa). ANK repeat units follow at residues 153 to 182, 186 to 215, 217 to 246, 252 to 281, 285 to 314, 318 to 347, 349 to 368, 372 to 401, and 405 to 435; these read NLTN…DVNF, NGKS…RIND, VDFV…ELDV, EMMT…NANA, RRWT…VKYA, NGKT…LLQA, RVDD…EVNR, NGWT…EVDS, and AGYT…QTNL.

As to expression, expressed in roots.

The protein localises to the cytoplasm. It localises to the nucleus. Its subcellular location is the cell membrane. In terms of biological role, may be involved in arbuscular mycorrhizal (AM) symbiosis with AM fungi and in nitrogen-fixing rhizobial bacteria symbiosis leading to the formation of root nodules. The protein is Protein VAPYRIN-LIKE of Medicago truncatula (Barrel medic).